Reading from the N-terminus, the 248-residue chain is uncharacterized protein (248 aa).

This is an uncharacterized protein from Escherichia coli (Bacteriophage T4).